Consider the following 91-residue polypeptide: Acylphosphatase (91 aa).

Positions 5-91 (RAHVFVSGRV…EGVDGFEVRW (87 aa)) constitute an Acylphosphatase-like domain. Catalysis depends on residues Arg20 and Asn38.

It belongs to the acylphosphatase family.

The catalysed reaction is an acyl phosphate + H2O = a carboxylate + phosphate + H(+). This chain is Acylphosphatase (acyP), found in Haloarcula marismortui (strain ATCC 43049 / DSM 3752 / JCM 8966 / VKM B-1809) (Halobacterium marismortui).